A 310-amino-acid chain; its full sequence is MTDKLPLALFLMGPTASGKTELAIRLRQRYPVEIISVDSALIYKDMNIGTAKPDERELSLAPHRLIDILDPSESYSAADFRRDALQAMDDIVAEGKIPLLVGGTMLYYKALLEGLSPLPAANPEIRQQIEQEALTKGWSVLHDELKEIDPVSAARIHPNDPQRLSRALEVFRISGKTLTELTQTKGDSLPYRVKQFAIAPKDRAELHRRIELRFDKMMEAGFEEEMKALYARKDLHPDLPSIRCVGYRQMWEYLDGDCTRDEAVFRGICATRQLAKRQITWLRSWNDLTWLDSDNIEQALETMSEAIASD.

Residue 13 to 20 (GPTASGKT) coordinates ATP. Position 15–20 (15–20 (TASGKT)) interacts with substrate. Interaction with substrate tRNA stretches follow at residues 38-41 (DSAL), 162-166 (QRLSR), 243-248 (RCVGYR), and 276-283 (KRQITWLR).

The protein belongs to the IPP transferase family. Monomer. Mg(2+) serves as cofactor.

The enzyme catalyses adenosine(37) in tRNA + dimethylallyl diphosphate = N(6)-dimethylallyladenosine(37) in tRNA + diphosphate. Catalyzes the transfer of a dimethylallyl group onto the adenine at position 37 in tRNAs that read codons beginning with uridine, leading to the formation of N6-(dimethylallyl)adenosine (i(6)A). The chain is tRNA dimethylallyltransferase from Vibrio campbellii (strain ATCC BAA-1116).